An 861-amino-acid chain; its full sequence is Extra-large guanine nucleotide-binding protein 2 (861 aa).

2 disordered regions span residues 1–32 (MAAV…TSSG) and 121–168 (VSGS…DDRV). Positions 131 to 143 (KRLDVPEEVKSPA) are enriched in basic and acidic residues. Residues 146–156 (RLSPSSPLSAS) are compositionally biased toward low complexity. Basic and acidic residues predominate over residues 157 to 168 (AREEDHLDDDRV). Positions 204–211 (RAERKGKR) match the Nuclear localization signal motif. The RING-type; degenerate zinc finger occupies 214 to 257 (CYRCQLGNRFTEKEVCIVCDAKYCFNCVRRAMGAMPEGRKCQAC). The G-alpha domain maps to 461 to 853 (MLNKLLLIGS…TSMFQEMSTT (393 aa)). The interval 464 to 477 (KLLLIGSEKGGATT) is G1 motif. A GTP-binding site is contributed by 469 to 477 (GSEKGGATT). T476 lines the Ca(2+) pocket. The tract at residues 523-545 (EMSNDQSSGNVGDETSAKPGNSI) is disordered. Residue 624 to 632 (DILQAEGLS) participates in GTP binding. The tract at residues 624–632 (DILQAEGLS) is G2 motif. S632 is a Ca(2+) binding site. Residues 665-674 (YQLIRLNPRS) are G3 motif. The interval 737-744 (LLVLTKFD) is G4 motif. 741 to 744 (TKFD) is a binding site for GTP. The tract at residues 818 to 823 (QVSLES) is G5 motif.

This sequence belongs to the G-alpha family. XLG subfamily. Interacts with GB1. Component of a G-protein complex at least composed of XLG2 and GB1. Interacts with RTV1. Ca(2+) serves as cofactor. Ubiquitous. Strongly expressed in vascular tissues, root and shoot meristems and lateral root primordia.

It localises to the nucleus. In terms of biological role, guanine nucleotide-binding proteins (G proteins) are involved as modulators or transducers in various transmembrane signaling systems. Binds GTP with specificity. Plays a role in the root morphogenesis by regulation of the cell proliferation. Acts as a positive regulator in resistance to pathogen that triggers the salicylic acid (SA) pathway. Promotes the DNA binding activity of RTV1 specifically to promoter regions of FT and SOC1 in vivo leading to the activation of floral integrator genes. The polypeptide is Extra-large guanine nucleotide-binding protein 2 (XLG2) (Arabidopsis thaliana (Mouse-ear cress)).